The primary structure comprises 264 residues: Apolipoprotein A-I (264 aa).

Residues 1–18 (MRVVVVTLALLFLTGTQA) form the signal peptide. A run of 2 repeats spans residues 67–88 (LKLA…EDMA) and 89–110 (PYYK…AELT). A 10 X approximate tandem repeats region spans residues 67 to 264 (LKLADNLDTL…LLDELQKTVA (198 aa)). One copy of the 3; half-length repeat lies at 111–121 (KDLEEVKEKIR). 5 repeat units span residues 122-143 (PFLD…QRLA), 144-165 (PVAE…QKLT), 166-187 (PVAE…KNLA), 188-209 (PYSD…EKGI), and 210-231 (PQAA…EKMT). The stretch at 232-242 (PLVQDFKERLT) is one 9; half-length repeat. The stretch at 243–264 (PYAENLKTRFISLLDELQKTVA) is repeat 10.

The protein belongs to the apolipoprotein A1/A4/E family. As to expression, major protein of plasma HDL, also found in chylomicrons.

The protein resides in the secreted. Its function is as follows. Participates in the reverse transport of cholesterol from tissues to the liver for excretion by promoting cholesterol efflux from tissues and by acting as a cofactor for the lecithin cholesterol acyltransferase (LCAT). The chain is Apolipoprotein A-I (APOA1) from Anas platyrhynchos (Mallard).